A 560-amino-acid polypeptide reads, in one-letter code: Oxygen-dependent choline dehydrogenase (560 aa).

An FAD-binding site is contributed by D8–E37. H475 functions as the Proton acceptor in the catalytic mechanism.

The protein belongs to the GMC oxidoreductase family. Requires FAD as cofactor.

It catalyses the reaction choline + A = betaine aldehyde + AH2. The catalysed reaction is betaine aldehyde + NAD(+) + H2O = glycine betaine + NADH + 2 H(+). It participates in amine and polyamine biosynthesis; betaine biosynthesis via choline pathway; betaine aldehyde from choline (cytochrome c reductase route): step 1/1. Involved in the biosynthesis of the osmoprotectant glycine betaine. Catalyzes the oxidation of choline to betaine aldehyde and betaine aldehyde to glycine betaine at the same rate. The polypeptide is Oxygen-dependent choline dehydrogenase (Stenotrophomonas maltophilia (strain R551-3)).